Here is a 249-residue protein sequence, read N- to C-terminus: Probable transcriptional regulatory protein CYA_2259 (249 aa).

The protein belongs to the TACO1 family.

It is found in the cytoplasm. The protein is Probable transcriptional regulatory protein CYA_2259 of Synechococcus sp. (strain JA-3-3Ab) (Cyanobacteria bacterium Yellowstone A-Prime).